The following is a 500-amino-acid chain: Aromatic-L-amino-acid decarboxylase (500 aa).

Residue proline 102 coordinates L-tryptophan. Serine 168 contacts pyridoxal 5'-phosphate. Histidine 203 contacts L-tryptophan. Threonine 262 contributes to the pyridoxal 5'-phosphate binding site. Histidine 318 serves as a coordination point for L-tryptophan. Lysine 319 bears the N6-(pyridoxal phosphate)lysine mark. Residue tyrosine 348 participates in L-tryptophan binding.

This sequence belongs to the group II decarboxylase family. Homodimer. Pyridoxal 5'-phosphate serves as cofactor.

It catalyses the reaction L-tryptophan + H(+) = tryptamine + CO2. It carries out the reaction 5-hydroxy-L-tryptophan + H(+) = serotonin + CO2. Functionally, catalyzes the decarboxylation of L-tryptophan to tryptamine and L-5-hydroxytryptophan to serotonin, respectively. The protein is Aromatic-L-amino-acid decarboxylase of Catharanthus roseus (Madagascar periwinkle).